An 85-amino-acid polypeptide reads, in one-letter code: Large ribosomal subunit protein bL27 (85 aa).

Residues 1-23 (MAHKKGQGSTQNNRDSAGRRLGV) form a disordered region.

It belongs to the bacterial ribosomal protein bL27 family.

The polypeptide is Large ribosomal subunit protein bL27 (Aliarcobacter butzleri (strain RM4018) (Arcobacter butzleri)).